We begin with the raw amino-acid sequence, 194 residues long: Large ribosomal subunit protein bL12m (194 aa).

A mitochondrion-targeting transit peptide spans 1–33 (MSLRILAKRSSSIWMKTRVTPALISPITITTRF). Asn-34 carries an N-linked (GlcNAc...) asparagine glycan. Positions 101 to 120 (AGNVPSSTGEAGSGAEEEAK) are disordered. Residues 105 to 114 (PSSTGEAGSG) show a composition bias toward low complexity.

Belongs to the bacterial ribosomal protein bL12 family. As to quaternary structure, component of the mitochondrial large ribosomal subunit (mt-LSU). Mature yeast 74S mitochondrial ribosomes consist of a small (37S) and a large (54S) subunit. The 37S small subunit contains a 15S ribosomal RNA (15S mt-rRNA) and 34 different proteins. The 54S large subunit contains a 21S rRNA (21S mt-rRNA) and 46 different proteins. Post-translationally, N-glycosylated.

Its subcellular location is the mitochondrion. Functionally, component of the mitochondrial ribosome (mitoribosome), a dedicated translation machinery responsible for the synthesis of mitochondrial genome-encoded proteins, including at least some of the essential transmembrane subunits of the mitochondrial respiratory chain. The mitoribosomes are attached to the mitochondrial inner membrane and translation products are cotranslationally integrated into the membrane. This chain is Large ribosomal subunit protein bL12m (MNP1), found in Saccharomyces cerevisiae (strain ATCC 204508 / S288c) (Baker's yeast).